An 83-amino-acid polypeptide reads, in one-letter code: Cytochrome b559 subunit alpha (83 aa).

A helical transmembrane segment spans residues 21–35 (VIHSITIPSLFIAGW). His23 is a binding site for heme.

Belongs to the PsbE/PsbF family. As to quaternary structure, heterodimer of an alpha subunit and a beta subunit. PSII is composed of 1 copy each of membrane proteins PsbA, PsbB, PsbC, PsbD, PsbE, PsbF, PsbH, PsbI, PsbJ, PsbK, PsbL, PsbM, PsbT, PsbX, PsbY, PsbZ, Psb30/Ycf12, at least 3 peripheral proteins of the oxygen-evolving complex and a large number of cofactors. It forms dimeric complexes. It depends on heme b as a cofactor.

The protein resides in the plastid. It localises to the chloroplast thylakoid membrane. Its function is as follows. This b-type cytochrome is tightly associated with the reaction center of photosystem II (PSII). PSII is a light-driven water:plastoquinone oxidoreductase that uses light energy to abstract electrons from H(2)O, generating O(2) and a proton gradient subsequently used for ATP formation. It consists of a core antenna complex that captures photons, and an electron transfer chain that converts photonic excitation into a charge separation. The polypeptide is Cytochrome b559 subunit alpha (Staurastrum punctulatum (Green alga)).